Consider the following 110-residue polypeptide: Period circadian protein (110 aa).

Residues 23 to 97 (VTNTSIAGTG…GGAGGGGGVT (75 aa)) are disordered. 12 consecutive repeat copies span residues 30–31 (GT), 33–34 (GT), 36–37 (GT), 38–39 (GT), 40–41 (GT), 42–43 (GT), 44–45 (GT), 46–47 (GT), 48–49 (GT), 50–51 (GT), 52–53 (GT), and 54–55 (GT). Residues 30–63 (GTGGTGGTGTGTGTGTGTGTGTGTGTDTGTGTGT) show a composition bias toward gly residues. The segment at 30-79 (GTGGTGGTGTGTGTGTGTGTGTGTGTDTGTGTGTRNGTNSGTNSGTRTGT) is 24 X 2 AA approximate tandem repeats of G-T. Residues 56–57 (DT) form a 13; approximate repeat. 3 tandem repeats follow at residues 58–59 (GT), 60–61 (GT), and 62–63 (GT). A 17; approximate repeat occupies 64–65 (RN). A compositionally biased stretch (low complexity) spans 64 to 83 (RNGTNSGTNSGTRTGTASSY). Copy 18 of the repeat occupies 66-67 (GT). Residues 68–69 (NS) form a 19; approximate repeat. Residues 70-71 (GT) form repeat 20. Residues 72-73 (NS) form a 21; approximate repeat. Repeat unit 22 spans residues 74 to 75 (GT). One copy of the 23; approximate repeat lies at 76 to 77 (RT). Residues 78–79 (GT) form repeat 24. Over residues 84–96 (RGGGGGAGGGGGV) the composition is skewed to gly residues.

In terms of assembly, forms a heterodimer with timeless (TIM); the complex then translocates into the nucleus. In terms of processing, phosphorylated with a circadian rhythmicity, probably by the double-time protein (dbt). Phosphorylation could be implicated in the stability of per monomer and in the formation of heterodimer per-tim.

It is found in the nucleus. The protein localises to the cytoplasm. Its subcellular location is the perinuclear region. Its function is as follows. Essential for biological clock functions. Determines the period length of circadian and ultradian rhythms; an increase in PER dosage leads to shortened circadian rhythms and a decrease leads to lengthened circadian rhythms. Essential for the circadian rhythmicity of locomotor activity, eclosion behavior, and for the rhythmic component of the male courtship song that originates in the thoracic nervous system. The biological cycle depends on the rhythmic formation and nuclear localization of the TIM-PER complex. Light induces the degradation of TIM, which promotes elimination of PER. Nuclear activity of the heterodimer coordinatively regulates PER and TIM transcription through a negative feedback loop. Behaves as a negative element in circadian transcriptional loop. Does not appear to bind DNA, suggesting indirect transcriptional inhibition. The polypeptide is Period circadian protein (per) (Drosophila erecta (Fruit fly)).